Consider the following 351-residue polypeptide: Epoxyqueuosine reductase (351 aa).

The active-site Proton donor is aspartate 131. The region spanning 177–205 (EDQPVDYGCGSCTRCVDFCPTKALLGDGR) is the 4Fe-4S ferredoxin-type domain. Cysteine 185, cysteine 188, cysteine 191, cysteine 195, cysteine 211, cysteine 237, cysteine 240, and cysteine 244 together coordinate [4Fe-4S] cluster.

This sequence belongs to the QueG family. As to quaternary structure, monomer. The cofactor is cob(II)alamin. Requires [4Fe-4S] cluster as cofactor.

It localises to the cytoplasm. The enzyme catalyses epoxyqueuosine(34) in tRNA + AH2 = queuosine(34) in tRNA + A + H2O. It participates in tRNA modification; tRNA-queuosine biosynthesis. Catalyzes the conversion of epoxyqueuosine (oQ) to queuosine (Q), which is a hypermodified base found in the wobble positions of tRNA(Asp), tRNA(Asn), tRNA(His) and tRNA(Tyr). This Lactococcus garvieae (strain Lg2) (Enterococcus seriolicida) protein is Epoxyqueuosine reductase.